The chain runs to 3122 residues: DNA polymerase zeta catalytic subunit (3122 aa).

5 disordered regions span residues 270-289 (QRRR…SQDC), 425-457 (GYQG…NEPQ), 487-509 (LCRN…EMEW), 524-545 (LDGT…RAHS), and 842-886 (TSTK…TFEN). The span at 277–286 (ESSQISQPES) shows a compositional bias: polar residues. Residues 497 to 509 (EEDDSSSEEEMEW) show a composition bias toward acidic residues. 2 stretches are compositionally biased toward polar residues: residues 533–545 (DNPL…RAHS) and 842–860 (TSTK…THND). S1029 is subject to Phosphoserine. Disordered stretches follow at residues 1034 to 1075 (YPIY…TLSF), 1154 to 1285 (VYNT…PTGI), 1429 to 1453 (VSVS…ESQT), 1538 to 1616 (KAQS…LSDD), 1842 to 1869 (NDVL…SFTP), 1959 to 1979 (NPRP…ESSN), and 2091 to 2138 (AAVP…RHSS). At T1040 the chain carries Phosphothreonine. Composition is skewed to basic residues over residues 1042 to 1063 (KKSH…KQHR) and 1166 to 1179 (KASR…KSKA). Basic and acidic residues predominate over residues 1215 to 1239 (RANEKSLSRKHAIPADEKMKPHSEA). The segment covering 1243–1270 (PNHQSVSELTSSSGAQALSKQKEMSQTG) has biased composition (polar residues). Residues 1429 to 1440 (VSVSEQSKTSET) show a composition bias toward low complexity. 2 stretches are compositionally biased toward polar residues: residues 1441 to 1453 (CSPG…ESQT) and 1538 to 1561 (KAQS…ISVS). The span at 1566–1587 (KANKRTRPVTSPRKPRTPRRTK) shows a compositional bias: basic residues. Positions 1588-1598 (PKEQTPRRLKV) are enriched in basic and acidic residues. The segment covering 1602-1615 (NLQTSGHLDNSLSD) has biased composition (polar residues). The segment at 1844–1895 (VLTPTPDSSPRSTSSPLQSKNGSFTPRTAHILKPLMSPPSREEIVATLLDHD) is mediates interaction with MAD2L2. Residues 1846–1859 (TPTPDSSPRSTSSP) are compositionally biased toward low complexity. The span at 1860-1869 (LQSKNGSFTP) shows a compositional bias: polar residues. S1964 is subject to Phosphoserine. 4 residues coordinate Zn(2+): C3034, C3037, C3046, and C3049. The CysA-type zinc-finger motif lies at 3034-3049 (CPVCDDLTQHGICSKC). [4Fe-4S] cluster is bound by residues C3078, C3081, C3091, and C3096. A CysB motif motif is present at residues 3078-3096 (CRNCTGSFDRHIPCVSLNC).

Belongs to the DNA polymerase type-B family. As to quaternary structure, heterodimer with MAD2L2. This dimer forms the minimal DNA polymerase zeta complex (Pol-zeta2), with REV3L bearing DNA polymerase catalytic activity, although its activity is very low in this context. Component of the tetrameric Pol-zeta complex (Pol-zeta4), which consists of REV3L, MAD2L2, POLD2 and POLD3; Pol-zeta4 is the fully active form of DNA polymerase zeta. The cofactor is [4Fe-4S] cluster.

The protein resides in the nucleus. It carries out the reaction DNA(n) + a 2'-deoxyribonucleoside 5'-triphosphate = DNA(n+1) + diphosphate. Its function is as follows. Catalytic subunit of the DNA polymerase zeta complex, an error-prone polymerase specialized in translesion DNA synthesis (TLS). Lacks an intrinsic 3'-5' exonuclease activity and thus has no proofreading function. The chain is DNA polymerase zeta catalytic subunit (Rev3l) from Mus musculus (Mouse).